Here is a 691-residue protein sequence, read N- to C-terminus: Glycine--tRNA ligase beta subunit (691 aa).

Belongs to the class-II aminoacyl-tRNA synthetase family. In terms of assembly, tetramer of two alpha and two beta subunits.

Its subcellular location is the cytoplasm. The catalysed reaction is tRNA(Gly) + glycine + ATP = glycyl-tRNA(Gly) + AMP + diphosphate. This is Glycine--tRNA ligase beta subunit from Buchnera aphidicola subsp. Schizaphis graminum (strain Sg).